A 122-amino-acid chain; its full sequence is Small ribosomal subunit protein uS13 (122 aa).

Residues 97-122 are disordered; sequence PVRGQRTHTNARTRKGPAKAIAGKKK.

It belongs to the universal ribosomal protein uS13 family. Part of the 30S ribosomal subunit. Forms a loose heterodimer with protein S19. Forms two bridges to the 50S subunit in the 70S ribosome.

Located at the top of the head of the 30S subunit, it contacts several helices of the 16S rRNA. In the 70S ribosome it contacts the 23S rRNA (bridge B1a) and protein L5 of the 50S subunit (bridge B1b), connecting the 2 subunits; these bridges are implicated in subunit movement. Contacts the tRNAs in the A and P-sites. This chain is Small ribosomal subunit protein uS13, found in Brucella abortus (strain S19).